The primary structure comprises 789 residues: Zinc finger FYVE domain-containing protein 1 (789 aa).

Residues 416–788 (MAHSSFFPDE…LSVMTGKGPL (373 aa)) are required for localization in the lipid droplets. 2 FYVE-type zinc fingers span residues 598–659 (NSQI…EARN) and 715–775 (DHEI…KKPA). The Zn(2+) site is built by Cys-604, Cys-607, Cys-620, Cys-623, Cys-628, Cys-631, Cys-651, Cys-654, Cys-721, Cys-724, Cys-737, Cys-740, Cys-745, Cys-748, Cys-767, and Cys-770.

Interacts with RAB18 (in GTP-bound form). Interacts with BSCL2 in a RAB18-dependent manner. Interacts with ZW10.

Its subcellular location is the golgi apparatus. The protein localises to the golgi stack. It is found in the endoplasmic reticulum. It localises to the preautophagosomal structure. The protein resides in the lipid droplet. Its subcellular location is the mitochondrion. Functionally, plays a role in the formation of lipid droplets (LDs) which are storage organelles at the center of lipid and energy homeostasis. Regulates the morphology, size and distribution of LDs. Mediates the formation of endoplasmic reticulum-lipid droplets (ER-LD) contact sites by forming a complex with RAB18 and ZW10. Binds to phosphatidylinositol 3-phosphate (PtdIns3P) through FYVE-type zinc finger. This is Zinc finger FYVE domain-containing protein 1 (ZFYVE1) from Pongo abelii (Sumatran orangutan).